A 316-amino-acid chain; its full sequence is MSVQSITESNQPPVICLMGPTASGKTALAMALKDALPCDIVSVDSALIYRDMDIGTAKPTKSELVQYPHRLIDLRDASESYSAADFCRDALVEIAEIRSNGRIPLLVGGTMMYFKSLIEGISPLPTANPEIRQAIEAEALSKGWQAMHDQLAEIDPVSAERIHPNDPQRITRALEVYRLTSNTLTQLTQIKGAKLAGDVLQLAITPRERSTLHERIALRYQQMIDLGFEQEVIKLKSRDDLHQDLPSIRCVGYRQMWQHLEGEFDHDEMIFRGVCATRQLAKRQLTWLRNWPDLHWLTTDDKTNLAQVLSLLEAKH.

19 to 26 (GPTASGKT) is an ATP binding site. 21-26 (TASGKT) is a substrate binding site. Interaction with substrate tRNA stretches follow at residues 44–47 (DSAL), 168–172 (QRITR), and 249–254 (RCVGYR).

It belongs to the IPP transferase family. In terms of assembly, monomer. Requires Mg(2+) as cofactor.

It carries out the reaction adenosine(37) in tRNA + dimethylallyl diphosphate = N(6)-dimethylallyladenosine(37) in tRNA + diphosphate. Its function is as follows. Catalyzes the transfer of a dimethylallyl group onto the adenine at position 37 in tRNAs that read codons beginning with uridine, leading to the formation of N6-(dimethylallyl)adenosine (i(6)A). This Colwellia psychrerythraea (strain 34H / ATCC BAA-681) (Vibrio psychroerythus) protein is tRNA dimethylallyltransferase.